Here is a 162-residue protein sequence, read N- to C-terminus: Nucleotide-binding protein SAV_4896 (162 aa).

It belongs to the YajQ family.

Functionally, nucleotide-binding protein. This chain is Nucleotide-binding protein SAV_4896, found in Streptomyces avermitilis (strain ATCC 31267 / DSM 46492 / JCM 5070 / NBRC 14893 / NCIMB 12804 / NRRL 8165 / MA-4680).